The following is a 262-amino-acid chain: Cytochrome c oxidase subunit 3 (262 aa).

The next 7 helical transmembrane spans lie at 16-36 (PWPYVGACGALFITVGSVVYF), 39-59 (SQTWVLLMGAITLSLTMIVWW), 83-103 (GMLLFILSEVLFFFSFFWAFF), 128-148 (FSVPLLNTAVLLSSGATVTWA), 160-180 (AINGLTITVVLGLIFTGLQAM), 198-218 (FFVATGFHGMHVIIGTTFLAV), and 241-261 (WYWHFVDVVWLFLYICIYWWG).

It belongs to the cytochrome c oxidase subunit 3 family. In terms of assembly, component of the cytochrome c oxidase (complex IV, CIV), a multisubunit enzyme composed of a catalytic core of 3 subunits and several supernumerary subunits. The complex exists as a monomer or a dimer and forms supercomplexes (SCs) in the inner mitochondrial membrane with ubiquinol-cytochrome c oxidoreductase (cytochrome b-c1 complex, complex III, CIII).

It localises to the mitochondrion inner membrane. The enzyme catalyses 4 Fe(II)-[cytochrome c] + O2 + 8 H(+)(in) = 4 Fe(III)-[cytochrome c] + 2 H2O + 4 H(+)(out). Its function is as follows. Component of the cytochrome c oxidase, the last enzyme in the mitochondrial electron transport chain which drives oxidative phosphorylation. The respiratory chain contains 3 multisubunit complexes succinate dehydrogenase (complex II, CII), ubiquinol-cytochrome c oxidoreductase (cytochrome b-c1 complex, complex III, CIII) and cytochrome c oxidase (complex IV, CIV), that cooperate to transfer electrons derived from NADH and succinate to molecular oxygen, creating an electrochemical gradient over the inner membrane that drives transmembrane transport and the ATP synthase. Cytochrome c oxidase is the component of the respiratory chain that catalyzes the reduction of oxygen to water. Electrons originating from reduced cytochrome c in the intermembrane space (IMS) are transferred via the dinuclear copper A center (CU(A)) of subunit 2 and heme A of subunit 1 to the active site in subunit 1, a binuclear center (BNC) formed by heme A3 and copper B (CU(B)). The BNC reduces molecular oxygen to 2 water molecules using 4 electrons from cytochrome c in the IMS and 4 protons from the mitochondrial matrix. The protein is Cytochrome c oxidase subunit 3 (COIII) of Metridium senile (Brown sea anemone).